A 348-amino-acid chain; its full sequence is Mannonate dehydratase (348 aa).

This sequence belongs to the mannonate dehydratase family. The cofactor is Fe(2+). Requires Mn(2+) as cofactor.

The enzyme catalyses D-mannonate = 2-dehydro-3-deoxy-D-gluconate + H2O. Its pathway is carbohydrate metabolism; pentose and glucuronate interconversion. Functionally, catalyzes the dehydration of D-mannonate. The protein is Mannonate dehydratase of Streptococcus agalactiae serotype V (strain ATCC BAA-611 / 2603 V/R).